Here is a 290-residue protein sequence, read N- to C-terminus: Tubulin polyglutamylase complex subunit 1 (290 aa).

The interval 1–30 (MAAVEKRRQAVPPPAGFTDSGRQSVSRAAG) is disordered. 2 positions are modified to phosphoserine: Ser-34 and Ser-266.

As to quaternary structure, part of the neuronal tubulin polyglutamylase complex which contains TPGS1, TPGS2, TTLL1, LRRC49 and NICN1. Interacts with PCM1, CSTPP1 and LRRC49.

The protein localises to the cytoplasm. The protein resides in the cytoskeleton. Its subcellular location is the cilium axoneme. It localises to the flagellum axoneme. It is found in the cilium basal body. The protein localises to the flagellum basal body. The protein resides in the cell projection. Its subcellular location is the axon. It localises to the dendrite. It is found in the microtubule organizing center. The protein localises to the centrosome. The protein resides in the centriolar satellite. Subunit of the tubulin polyglutamylase complex (TPGC). The complex mediates cilia and flagella polyglutamylation which is essential for their biogenesis and motility. May act in the targeting of the tubulin polyglutamylase complex. Required for the development of the spermatid flagellum. This is Tubulin polyglutamylase complex subunit 1 from Homo sapiens (Human).